The chain runs to 435 residues: Putative F-box/FBD/LRR-repeat protein At5g56810 (435 aa).

The region spanning 14-62 (PDRISQLPNDLLFRILSLIPVSDAMSTSLLSKRWKSVWKMLPTLVYNEN) is the F-box domain. LRR repeat units follow at residues 64-95 (CSNI…TLEL), 146-173 (LKLQ…YLTC), 174-199 (VNFE…FLQR), 222-248 (KEQA…NIFD), 266-291 (SVRV…SLDL), and 316-341 (YDNF…KLNH). Positions 353–404 (CSVSEPSSVPECLSFHLETFQWIGYAGTFEEIAAAVYVLKNARCLKNATISL) constitute an FBD domain.

The protein is Putative F-box/FBD/LRR-repeat protein At5g56810 of Arabidopsis thaliana (Mouse-ear cress).